The chain runs to 740 residues: Ion-translocating oxidoreductase complex subunit C (740 aa).

2 consecutive 4Fe-4S ferredoxin-type domains span residues 369 to 397 and 407 to 436; these read GEPQ…QQLY and KATT…VQYF. Positions 377, 380, 383, 387, 416, 419, 422, and 426 each coordinate [4Fe-4S] cluster. Positions 598 to 716 are disordered; the sequence is AKARKLEQQQ…EPEEQVDPRK (119 aa).

The protein belongs to the 4Fe4S bacterial-type ferredoxin family. RnfC subfamily. As to quaternary structure, the complex is composed of six subunits: RsxA, RsxB, RsxC, RsxD, RsxE and RsxG. It depends on [4Fe-4S] cluster as a cofactor.

The protein localises to the cell inner membrane. In terms of biological role, part of a membrane-bound complex that couples electron transfer with translocation of ions across the membrane. Required to maintain the reduced state of SoxR. The protein is Ion-translocating oxidoreductase complex subunit C of Shigella flexneri serotype 5b (strain 8401).